Reading from the N-terminus, the 264-residue chain is Thymidylate synthase (264 aa).

Arg-21 serves as a coordination point for dUMP. His-51 is a binding site for (6R)-5,10-methylene-5,6,7,8-tetrahydrofolate. 126–127 (RR) contributes to the dUMP binding site. Cys-146 serves as the catalytic Nucleophile. Residues 166–169 (RSCD), Asn-177, and 207–209 (HLY) each bind dUMP. Residue Asp-169 coordinates (6R)-5,10-methylene-5,6,7,8-tetrahydrofolate. Ala-263 provides a ligand contact to (6R)-5,10-methylene-5,6,7,8-tetrahydrofolate.

Belongs to the thymidylate synthase family. Bacterial-type ThyA subfamily. Homodimer.

The protein resides in the cytoplasm. It carries out the reaction dUMP + (6R)-5,10-methylene-5,6,7,8-tetrahydrofolate = 7,8-dihydrofolate + dTMP. The protein operates within pyrimidine metabolism; dTTP biosynthesis. In terms of biological role, catalyzes the reductive methylation of 2'-deoxyuridine-5'-monophosphate (dUMP) to 2'-deoxythymidine-5'-monophosphate (dTMP) while utilizing 5,10-methylenetetrahydrofolate (mTHF) as the methyl donor and reductant in the reaction, yielding dihydrofolate (DHF) as a by-product. This enzymatic reaction provides an intracellular de novo source of dTMP, an essential precursor for DNA biosynthesis. The protein is Thymidylate synthase of Yersinia pestis bv. Antiqua (strain Antiqua).